The primary structure comprises 346 residues: ATP-dependent (S)-NAD(P)H-hydrate dehydratase 2 (346 aa).

The tract at residues 1–20 (MMVHSPLATGPHPTTHLEPT) is disordered. Residues 28-339 (LLRKAFQMIP…GYIGEAFEQV (312 aa)) form the YjeF C-terminal domain. (6S)-NADPHX-binding positions include Gly135 and 188 to 194 (NHVEFQR). Residues 228–232 (KGSID) and 248–257 (GSPKRCGGQG) each bind ATP. Asp258 is a (6S)-NADPHX binding site.

Belongs to the NnrD/CARKD family. Requires Mg(2+) as cofactor.

The protein resides in the cytoplasm. The catalysed reaction is (6S)-NADHX + ATP = ADP + phosphate + NADH + H(+). It carries out the reaction (6S)-NADPHX + ATP = ADP + phosphate + NADPH + H(+). Its function is as follows. Catalyzes the dehydration of the S-form of NAD(P)HX at the expense of ATP, which is converted to ADP. Together with NAD(P)HX epimerase, which catalyzes the epimerization of the S- and R-forms, the enzyme allows the repair of both epimers of NAD(P)HX, a damaged form of NAD(P)H that is a result of enzymatic or heat-dependent hydration. The chain is ATP-dependent (S)-NAD(P)H-hydrate dehydratase 2 from Puccinia graminis f. sp. tritici (strain CRL 75-36-700-3 / race SCCL) (Black stem rust fungus).